The following is a 283-amino-acid chain: Probable endonuclease 4 (283 aa).

Residues His69, His113, Glu148, Asp182, His185, His217, Asp230, His232, and Glu262 each contribute to the Zn(2+) site.

This sequence belongs to the AP endonuclease 2 family. Zn(2+) serves as cofactor.

It catalyses the reaction Endonucleolytic cleavage to 5'-phosphooligonucleotide end-products.. Endonuclease IV plays a role in DNA repair. It cleaves phosphodiester bonds at apurinic or apyrimidinic (AP) sites, generating a 3'-hydroxyl group and a 5'-terminal sugar phosphate. This is Probable endonuclease 4 from Bifidobacterium longum (strain DJO10A).